A 237-amino-acid chain; its full sequence is Proteasome subunit alpha (237 aa).

The protein belongs to the peptidase T1A family. The 20S proteasome core is composed of 14 alpha and 14 beta subunits that assemble into four stacked heptameric rings, resulting in a barrel-shaped structure. The two inner rings, each composed of seven catalytic beta subunits, are sandwiched by two outer rings, each composed of seven alpha subunits. The catalytic chamber with the active sites is on the inside of the barrel. Has a gated structure, the ends of the cylinder being occluded by the N-termini of the alpha-subunits. Is capped by the proteasome-associated ATPase, ARC.

The protein localises to the cytoplasm. Its pathway is protein degradation; proteasomal Pup-dependent pathway. With respect to regulation, the formation of the proteasomal ATPase ARC-20S proteasome complex, likely via the docking of the C-termini of ARC into the intersubunit pockets in the alpha-rings, may trigger opening of the gate for substrate entry. Interconversion between the open-gate and close-gate conformations leads to a dynamic regulation of the 20S proteasome proteolysis activity. Its function is as follows. Component of the proteasome core, a large protease complex with broad specificity involved in protein degradation. The chain is Proteasome subunit alpha from Kineococcus radiotolerans (strain ATCC BAA-149 / DSM 14245 / SRS30216).